A 363-amino-acid chain; its full sequence is Cinnamyl alcohol dehydrogenase 2 (363 aa).

C47 is a binding site for Zn(2+). T49 lines the NADP(+) pocket. Zn(2+) is bound by residues H69, E70, C100, C103, C106, C114, and C163. NADP(+)-binding positions include T167, 188–193 (GLGGVG), 211–216 (SSSARK), T251, G275, and 298–300 (SFI).

The protein belongs to the zinc-containing alcohol dehydrogenase family. Homodimer. Requires Zn(2+) as cofactor. In terms of tissue distribution, expressed in roots behind the root tips in the pericycle region and layer of cortical cells adjacent to the exodermis. Expressed in vascular bundles and lateral veins of leaf sheaths and blades. Expressed in the vicinity of vascular bundles in the first internode below the inflorescence. Highly expressed in the culm.

It carries out the reaction (E)-cinnamyl alcohol + NADP(+) = (E)-cinnamaldehyde + NADPH + H(+). The catalysed reaction is (E)-coniferol + NADP(+) = (E)-coniferaldehyde + NADPH + H(+). It catalyses the reaction (E)-sinapyl alcohol + NADP(+) = (E)-sinapaldehyde + NADPH + H(+). The enzyme catalyses (E)-4-coumaroyl alcohol + NADP(+) = (E)-4-coumaraldehyde + NADPH + H(+). It carries out the reaction (E)-caffeyl alcohol + NADP(+) = (E)-caffeyl aldehyde + NADPH + H(+). Its pathway is aromatic compound metabolism; phenylpropanoid biosynthesis. Functionally, involved in lignin biosynthesis. Catalyzes the final step specific for the production of lignin monomers. Catalyzes the NADPH-dependent reduction of coniferaldehyde and sinapaldehyde to their respective alcohols. Plays the major role in monolignol biosynthesis. Functions cooperatively with COMT in the culm internodes for the biosynthesis of monolignols, the lignin precursors. May be involved in lignin biosynthesis in leaves and roots. The sequence is that of Cinnamyl alcohol dehydrogenase 2 from Oryza sativa subsp. japonica (Rice).